Reading from the N-terminus, the 455-residue chain is Oxysterols receptor LXR-beta (455 aa).

Over residues 1 to 10 (MSTPTTNSVD) the composition is skewed to polar residues. The tract at residues 1–53 (MSTPTTNSVDTPLPGNGPSTPSSSPGGKEDGPEPCPGGADPDVPSTDGADSAS) is disordered. A transactivation AF-1; required for ligand-independent transactivation function region spans residues 1-80 (MSTPTTNSVD…GPAPKMLGDE (80 aa)). Over residues 14 to 26 (PGNGPSTPSSSPG) the composition is skewed to low complexity. The segment at residues 79–156 (DELCQVCGDT…AGMREQCVLS (78 aa)) is a DNA-binding region (nuclear receptor). 2 NR C4-type zinc fingers span residues 82-102 (CQVC…CEGC) and 120-144 (CRGG…LRKC). The disordered stretch occupies residues 164–210 (KIRKQQQQQQQQSSPTGPGVSSSSPASGPGASPGGSDGGGQGSGEGE). Residues 168-193 (QQQQQQQQSSPTGPGVSSSSPASGPG) show a composition bias toward low complexity. Residues 194–210 (ASPGGSDGGGQGSGEGE) show a composition bias toward gly residues. The segment at 214–455 (LTAAQELMIQ…LLSEIWDVHE (242 aa)) is transactivation AF-2; required for ligand-dependent transactivation function; mediates interaction with CCAR2. An NR LBD domain is found at 217-455 (AQELMIQQLV…LLSEIWDVHE (239 aa)). Glycyl lysine isopeptide (Lys-Gly) (interchain with G-Cter in SUMO2) cross-links involve residues Lys-404 and Lys-442.

It belongs to the nuclear hormone receptor family. NR1 subfamily. Forms a heterodimer with RXR. Interacts with CCAR2 (via N-terminus) in a ligand-independent manner. Interacts (when sumoylated) with GPS2; interaction with GPS2 onto hepatic acute phase protein promoters prevents N-Cor corepressor complex dissociation. Interacts with ABCA12 and ABCA1; this interaction is required for ABCA1 localization to the cell surface and is necessary for its normal activity and stability. Post-translationally, sumoylated by SUMO2 at Lys-404 and Lys-442 during the hepatic acute phase response, leading to promote interaction with GPS2 and prevent N-Cor corepressor complex dissociation.

It is found in the nucleus. In terms of biological role, nuclear receptor that exhibits a ligand-dependent transcriptional activation activity. Binds preferentially to double-stranded oligonucleotide direct repeats having the consensus half-site sequence 5'-AGGTCA-3' and 4-nt spacing (DR-4). Regulates cholesterol uptake through MYLIP-dependent ubiquitination of LDLR, VLDLR and LRP8; DLDLR and LRP8. Interplays functionally with RORA for the regulation of genes involved in liver metabolism. Induces LPCAT3-dependent phospholipid remodeling in endoplasmic reticulum (ER) membranes of hepatocytes, driving SREBF1 processing and lipogenesis. Via LPCAT3, triggers the incorporation of arachidonate into phosphatidylcholines of ER membranes, increasing membrane dynamics and enabling triacylglycerols transfer to nascent very low-density lipoprotein (VLDL) particles. Via LPCAT3 also counteracts lipid-induced ER stress response and inflammation, likely by modulating SRC kinase membrane compartmentalization and limiting the synthesis of lipid inflammatory mediators. Plays an anti-inflammatory role during the hepatic acute phase response by acting as a corepressor: inhibits the hepatic acute phase response by preventing dissociation of the N-Cor corepressor complex. The polypeptide is Oxysterols receptor LXR-beta (NR1H2) (Bos taurus (Bovine)).